The following is a 494-amino-acid chain: Glycerol kinase (494 aa).

Threonine 13 provides a ligand contact to ADP. Residues threonine 13, threonine 14, and serine 15 each contribute to the ATP site. Threonine 13 contributes to the sn-glycerol 3-phosphate binding site. An ADP-binding site is contributed by arginine 17. Residues arginine 83, glutamate 84, tyrosine 135, and aspartate 244 each contribute to the sn-glycerol 3-phosphate site. Glycerol-binding residues include arginine 83, glutamate 84, tyrosine 135, aspartate 244, and glutamine 245. Residues threonine 266 and glycine 309 each contribute to the ADP site. Threonine 266, glycine 309, glutamine 313, and glycine 410 together coordinate ATP. The ADP site is built by glycine 410 and asparagine 414.

The protein belongs to the FGGY kinase family.

The catalysed reaction is glycerol + ATP = sn-glycerol 3-phosphate + ADP + H(+). It participates in polyol metabolism; glycerol degradation via glycerol kinase pathway; sn-glycerol 3-phosphate from glycerol: step 1/1. With respect to regulation, inhibited by fructose 1,6-bisphosphate (FBP). Functionally, key enzyme in the regulation of glycerol uptake and metabolism. Catalyzes the phosphorylation of glycerol to yield sn-glycerol 3-phosphate. The protein is Glycerol kinase of Shewanella oneidensis (strain ATCC 700550 / JCM 31522 / CIP 106686 / LMG 19005 / NCIMB 14063 / MR-1).